A 128-amino-acid polypeptide reads, in one-letter code: Secreted RxLR effector protein RXLR-C09 (128 aa).

Positions 1-22 are cleaved as a signal peptide; that stretch reads MRFCLVFIRLAAFVILSGGATS. A RxLR-dEER motif is present at residues 58–75; sequence RLLRLNDQADISGHDEER.

Belongs to the RxLR effector family.

The protein localises to the secreted. It localises to the host cell membrane. Its subcellular location is the host nucleus. In terms of biological role, secreted effector that suppresses pattern-triggered immunity (PTI) in plant host. This chain is Secreted RxLR effector protein RXLR-C09, found in Plasmopara halstedii (Downy mildew of sunflower).